A 335-amino-acid polypeptide reads, in one-letter code: UPF0353 protein MLBr01808 (335 aa).

2 consecutive transmembrane segments (helical) span residues 18–38 (WFFLFIFIVFGLAAFYVMMQV) and 67–87 (VPAILLMLALLLFTIAMAGPT). One can recognise a VWFA domain in the interval 98-294 (VVMLVIDVSQ…AELKAVYASL (197 aa)). Residues 309 to 329 (AGWLRLGVLVLALAALTALLI) traverse the membrane as a helical segment.

Belongs to the UPF0353 family.

The protein resides in the cell membrane. In Mycobacterium leprae (strain Br4923), this protein is UPF0353 protein MLBr01808.